The chain runs to 453 residues: MFNKLNKINKIKNCFNKSIYQINYSSKPIFKEGITNVKLDRDNKDGTSDYIKLHDNVIMNTYGRVSDIVFTHGKDSWLYDMKGDKYLDFGAGIAVNALGHSNDGWSEVVANQSKKLTHLSNLYYNQPAIELAQSMIASTPIFDKVFFANSGTEANEAALKFAKKIGIAKGGVDKHEIIAFSHGFSGRSMGSLSCTHKSKYREIYGPLVPGVHFAEYNDIESVKKLMSKSKTCAVIIEPVQGEGGLEAATVEFMQQLYKLCKENDCLLIVDEVQCGIGRTGQLWAHTRFDTEKCKPDIMTLAKPLAGGLPIGAVLVSDKVASEIKPGDHGTTFGGGPLVCEVGKYVFERISQPSFLKEVQEKGKYLTDGLKKLKDQFPNSILEIRTVGGLFVGIQLDHNVSDLVSYAKSQKILIINAGDDVIRFCPPLTITKQEIDQLLLVLKNYLIKVNSNKK.

N6-(pyridoxal phosphate)lysine is present on K302.

It belongs to the class-III pyridoxal-phosphate-dependent aminotransferase family. Requires pyridoxal 5'-phosphate as cofactor.

Its subcellular location is the mitochondrion matrix. It catalyses the reaction N(2)-acetyl-L-ornithine + 2-oxoglutarate = N-acetyl-L-glutamate 5-semialdehyde + L-glutamate. Its pathway is amino-acid biosynthesis; L-arginine biosynthesis; N(2)-acetyl-L-ornithine from L-glutamate: step 4/4. In Dictyostelium discoideum (Social amoeba), this protein is Probable acetylornithine aminotransferase, mitochondrial (argD).